A 191-amino-acid polypeptide reads, in one-letter code: Protein GrpE (191 aa).

Positions M1–T10 are enriched in basic and acidic residues. The tract at residues M1 to V28 is disordered.

The protein belongs to the GrpE family. In terms of assembly, homodimer.

It localises to the cytoplasm. In terms of biological role, participates actively in the response to hyperosmotic and heat shock by preventing the aggregation of stress-denatured proteins, in association with DnaK and GrpE. It is the nucleotide exchange factor for DnaK and may function as a thermosensor. Unfolded proteins bind initially to DnaJ; upon interaction with the DnaJ-bound protein, DnaK hydrolyzes its bound ATP, resulting in the formation of a stable complex. GrpE releases ADP from DnaK; ATP binding to DnaK triggers the release of the substrate protein, thus completing the reaction cycle. Several rounds of ATP-dependent interactions between DnaJ, DnaK and GrpE are required for fully efficient folding. The polypeptide is Protein GrpE (Aeromonas salmonicida (strain A449)).